A 206-amino-acid chain; its full sequence is Large ribosomal subunit protein uL4 (206 aa).

The tract at residues 47 to 75 is disordered; that stretch reads GTQSAKTRAEVSGGGIKPWRQKGTGRARQ.

It belongs to the universal ribosomal protein uL4 family. As to quaternary structure, part of the 50S ribosomal subunit.

In terms of biological role, one of the primary rRNA binding proteins, this protein initially binds near the 5'-end of the 23S rRNA. It is important during the early stages of 50S assembly. It makes multiple contacts with different domains of the 23S rRNA in the assembled 50S subunit and ribosome. Forms part of the polypeptide exit tunnel. The polypeptide is Large ribosomal subunit protein uL4 (Clostridium botulinum (strain 657 / Type Ba4)).